The primary structure comprises 100 residues: Small ribosomal subunit protein uS14c (100 aa).

This sequence belongs to the universal ribosomal protein uS14 family. As to quaternary structure, part of the 30S ribosomal subunit.

It localises to the plastid. The protein localises to the chloroplast. Binds 16S rRNA, required for the assembly of 30S particles. This is Small ribosomal subunit protein uS14c from Fagopyrum esculentum subsp. ancestrale (Wild buckwheat).